Reading from the N-terminus, the 158-residue chain is UPF0758 protein VC_1786 (158 aa).

Residues 37 to 158 enclose the MPN domain; that stretch reads TFARTENTTE…SVSFAERGWL (122 aa). The Zn(2+) site is built by His-108, His-110, and Asp-121. A JAMM motif motif is present at residues 108 to 121; it reads HNHPSGDPEPSQAD.

This sequence belongs to the UPF0758 family.

In Vibrio cholerae serotype O1 (strain ATCC 39315 / El Tor Inaba N16961), this protein is UPF0758 protein VC_1786.